The following is a 951-amino-acid chain: Leucine-rich repeat-containing G-protein coupled receptor 4 (951 aa).

The first 24 residues, Met1–Ala24, serve as a signal peptide directing secretion. The LRRNT domain maps to Ala25–Ala57. Residues Ala25–Thr544 lie on the Extracellular side of the membrane. Disulfide bonds link Cys29-Cys35 and Cys33-Cys43. LRR repeat units lie at residues Phe58–Asn79, Phe82–Gly103, Glu106–Gly127, Ala130–Gly151, Gln154–Pro177, Thr178–Asn199, Ser202–Gly223, Asn226–Leu247, Ser249–Gly270, and Leu273–Asn294. N-linked (GlcNAc...) asparagine glycosylation occurs at Asn68. The N-linked (GlcNAc...) asparagine glycan is linked to Asn199. N-linked (GlcNAc...) asparagine glycans are attached at residues Asn294 and Asn314. LRR repeat units follow at residues His320 to Glu341, Met344 to His365, Ala366 to Gly387, Ser390 to Thr411, and Pro414 to Gly435. A disulfide bridge connects residues Cys339 and Cys364. 2 disulfides stabilise this stretch: Cys470–Cys522 and Cys471–Cys476. Asn505 carries an N-linked (GlcNAc...) asparagine glycan. A helical membrane pass occupies residues Val545–Ala565. Residues Ser566–Leu575 lie on the Cytoplasmic side of the membrane. Residues Phe576 to Phe596 traverse the membrane as a helical segment. Residues Leu597–Val620 lie on the Extracellular side of the membrane. A disulfide bridge links Cys618 with Cys693. Residues Ala621–Val641 traverse the membrane as a helical segment. Topologically, residues Glu642–Gln661 are cytoplasmic. Residues Phe662 to Phe682 form a helical membrane-spanning segment. Residues His683–Ser703 lie on the Extracellular side of the membrane. Residues Leu704–Ile724 form a helical membrane-spanning segment. At Tyr725–Asn756 the chain is on the cytoplasmic side. The helical transmembrane segment at Cys757–Ile777 threads the bilayer. Over Ser778–Lys783 the chain is Extracellular. The chain crosses the membrane as a helical span at residues Ser784–Phe804. The Cytoplasmic portion of the chain corresponds to Asn805–Asp951. At Ser920 the chain carries Phosphoserine.

Belongs to the G-protein coupled receptor 1 family. Expressed in multiple steroidogenic tissues: placenta, ovary, testis and adrenal. Expressed also in spinal cord, thyroid, stomach, trachea, heart, pancreas, kidney, prostate and spleen.

It localises to the cell membrane. Its function is as follows. Receptor for R-spondins that potentiates the canonical Wnt signaling pathway and is involved in the formation of various organs. Upon binding to R-spondins (RSPO1, RSPO2, RSPO3 or RSPO4), associates with phosphorylated LRP6 and frizzled receptors that are activated by extracellular Wnt receptors, triggering the canonical Wnt signaling pathway to increase expression of target genes. In contrast to classical G-protein coupled receptors, does not activate heterotrimeric G-proteins to transduce the signal. Its function as activator of the Wnt signaling pathway is required for the development of various organs, including liver, kidney, intestine, bone, reproductive tract and eye. May also act as a receptor for norrin (NDP), such results however require additional confirmation in vivo. Required during spermatogenesis to activate the Wnt signaling pathway in peritubular myoid cells. Required for the maintenance of intestinal stem cells and Paneth cell differentiation in postnatal intestinal crypts. Acts as a regulator of bone formation and remodeling. Involved in kidney development; required for maintaining the ureteric bud in an undifferentiated state. Involved in the development of the anterior segment of the eye. Required during erythropoiesis. Also acts as a negative regulator of innate immunity by inhibiting TLR2/TLR4 associated pattern-recognition and pro-inflammatory cytokine production. Plays an important role in regulating the circadian rhythms of plasma lipids, partially through regulating the rhythmic expression of MTTP. Required for proper development of GnRH neurons (gonadotropin-releasing hormone expressing neurons) that control the release of reproductive hormones from the pituitary gland. The polypeptide is Leucine-rich repeat-containing G-protein coupled receptor 4 (LGR4) (Homo sapiens (Human)).